The primary structure comprises 109 residues: Iron-sulfur cluster assembly protein CyaY (109 aa).

Belongs to the frataxin family.

In terms of biological role, involved in iron-sulfur (Fe-S) cluster assembly. May act as a regulator of Fe-S biogenesis. The sequence is that of Iron-sulfur cluster assembly protein CyaY from Burkholderia lata (strain ATCC 17760 / DSM 23089 / LMG 22485 / NCIMB 9086 / R18194 / 383).